Here is a 125-residue protein sequence, read N- to C-terminus: Ribosome-binding factor A (125 aa).

Belongs to the RbfA family. Monomer. Binds 30S ribosomal subunits, but not 50S ribosomal subunits or 70S ribosomes.

Its subcellular location is the cytoplasm. One of several proteins that assist in the late maturation steps of the functional core of the 30S ribosomal subunit. Associates with free 30S ribosomal subunits (but not with 30S subunits that are part of 70S ribosomes or polysomes). Required for efficient processing of 16S rRNA. May interact with the 5'-terminal helix region of 16S rRNA. In Fervidobacterium nodosum (strain ATCC 35602 / DSM 5306 / Rt17-B1), this protein is Ribosome-binding factor A.